The following is a 433-amino-acid chain: Probable RNA 3'-terminal phosphate cyclase (433 aa).

Low complexity predominate over residues 1-10; it reads MGKNKNYNKN. Residues 1-28 form a disordered region; the sequence is MGKNKNYNKNQFKKSKTNNDTTVAQQQQ. Residues 18–28 are compositionally biased toward polar residues; it reads NNDTTVAQQQQ. ATP-binding positions include Gln137 and 328–332; that span reads YLQDQ. The Tele-AMP-histidine intermediate role is filled by His354. Residues 400–433 are disordered; the sequence is LNNNNNNSNSNTTTTTTTTTISTTTIDNQNSEEK. A compositionally biased stretch (low complexity) spans 401–425; that stretch reads NNNNNNSNSNTTTTTTTTTISTTTI.

It belongs to the RNA 3'-terminal cyclase family. Type 1 subfamily.

It localises to the nucleus. Its subcellular location is the nucleoplasm. It catalyses the reaction a 3'-end 3'-phospho-ribonucleotide-RNA + ATP = a 3'-end 2',3'-cyclophospho-ribonucleotide-RNA + AMP + diphosphate. Catalyzes the conversion of 3'-phosphate to a 2',3'-cyclic phosphodiester at the end of RNA. The mechanism of action of the enzyme occurs in 3 steps: (A) adenylation of the enzyme by ATP; (B) transfer of adenylate to an RNA-N3'P to produce RNA-N3'PP5'A; (C) and attack of the adjacent 2'-hydroxyl on the 3'-phosphorus in the diester linkage to produce the cyclic end product. The biological role of this enzyme is unknown but it is likely to function in some aspects of cellular RNA processing. The polypeptide is Probable RNA 3'-terminal phosphate cyclase (rtca) (Dictyostelium discoideum (Social amoeba)).